Here is a 323-residue protein sequence, read N- to C-terminus: Extracellular endo-alpha-(1-&gt;5)-L-arabinanase 1 (323 aa).

An N-terminal signal peptide occupies residues 1-32; the sequence is MKKKKTWKRFLHFSSAALAAGLIFTSAAPAEA. The active-site Proton acceptor is the Asp-44. Asp-44 is a binding site for substrate. Ca(2+) is bound at residue Asp-107. Substrate is bound by residues Gly-125 and 160 to 163; that span reads NAID. Glu-165 is a Ca(2+) binding site. 180–182 is a binding site for substrate; the sequence is SFW. Residue Glu-215 is the Proton donor of the active site. A Ca(2+)-binding site is contributed by Asp-287.

This sequence belongs to the glycosyl hydrolase 43 family. Ca(2+) serves as cofactor.

The protein localises to the secreted. The catalysed reaction is Endohydrolysis of (1-&gt;5)-alpha-arabinofuranosidic linkages in (1-&gt;5)-arabinans.. Its pathway is glycan metabolism; L-arabinan degradation. Functionally, involved in the degradation of arabinan and is a key enzyme in the complete degradation of the plant cell wall. Catalyzes the internal cleavage of alpha-(1-&gt;5)-L-arabinofuranosyl residues of linear 1,5-alpha-L-arabinan and of branched sugar beet arabinan. It displays no activity against heavily substituted arabinans or a range of other polysaccharides (larch wood arabinogalactan, wheat arabinoxylan and p-nitrophenyl-alpha-L-arabinofuranoside). The enzyme activity is progressively reduced as alpha-(1-&gt;5)-chains become shorter or more highly substituted. The protein is Extracellular endo-alpha-(1-&gt;5)-L-arabinanase 1 (abnA) of Bacillus subtilis (strain 168).